The sequence spans 189 residues: Xanthine phosphoribosyltransferase (189 aa).

Xanthine-binding residues include Leu20 and Asn27. 128 to 132 (ANGQA) provides a ligand contact to 5-phospho-alpha-D-ribose 1-diphosphate. Position 156 (Lys156) interacts with xanthine.

It belongs to the purine/pyrimidine phosphoribosyltransferase family. Xpt subfamily. Homodimer.

It localises to the cytoplasm. The enzyme catalyses XMP + diphosphate = xanthine + 5-phospho-alpha-D-ribose 1-diphosphate. The protein operates within purine metabolism; XMP biosynthesis via salvage pathway; XMP from xanthine: step 1/1. Converts the preformed base xanthine, a product of nucleic acid breakdown, to xanthosine 5'-monophosphate (XMP), so it can be reused for RNA or DNA synthesis. The sequence is that of Xanthine phosphoribosyltransferase from Leuconostoc mesenteroides subsp. mesenteroides (strain ATCC 8293 / DSM 20343 / BCRC 11652 / CCM 1803 / JCM 6124 / NCDO 523 / NBRC 100496 / NCIMB 8023 / NCTC 12954 / NRRL B-1118 / 37Y).